An 85-amino-acid polypeptide reads, in one-letter code: ATP synthase subunit c (85 aa).

A run of 2 helical transmembrane segments spans residues 10-30 (IAVG…FAIL) and 53-73 (FIIA…ALLF).

Belongs to the ATPase C chain family. As to quaternary structure, F-type ATPases have 2 components, F(1) - the catalytic core - and F(0) - the membrane proton channel. F(1) has five subunits: alpha(3), beta(3), gamma(1), delta(1), epsilon(1). F(0) has three main subunits: a(1), b(2) and c(10-14). The alpha and beta chains form an alternating ring which encloses part of the gamma chain. F(1) is attached to F(0) by a central stalk formed by the gamma and epsilon chains, while a peripheral stalk is formed by the delta and b chains.

Its subcellular location is the cell inner membrane. In terms of biological role, f(1)F(0) ATP synthase produces ATP from ADP in the presence of a proton or sodium gradient. F-type ATPases consist of two structural domains, F(1) containing the extramembraneous catalytic core and F(0) containing the membrane proton channel, linked together by a central stalk and a peripheral stalk. During catalysis, ATP synthesis in the catalytic domain of F(1) is coupled via a rotary mechanism of the central stalk subunits to proton translocation. Functionally, key component of the F(0) channel; it plays a direct role in translocation across the membrane. A homomeric c-ring of between 10-14 subunits forms the central stalk rotor element with the F(1) delta and epsilon subunits. The protein is ATP synthase subunit c of Aliivibrio salmonicida (strain LFI1238) (Vibrio salmonicida (strain LFI1238)).